Reading from the N-terminus, the 364-residue chain is Histidinol-phosphate aminotransferase (364 aa).

The tract at residues 1–46 is disordered; sequence MQPRDLSDHSPYVPGRGVEEVARDRGLDPDDLIKLSSNENPHGPSP. Residues 17-33 are compositionally biased toward basic and acidic residues; the sequence is GVEEVARDRGLDPDDLI. K222 is modified (N6-(pyridoxal phosphate)lysine).

The protein belongs to the class-II pyridoxal-phosphate-dependent aminotransferase family. Histidinol-phosphate aminotransferase subfamily. Pyridoxal 5'-phosphate is required as a cofactor.

The enzyme catalyses L-histidinol phosphate + 2-oxoglutarate = 3-(imidazol-4-yl)-2-oxopropyl phosphate + L-glutamate. The protein operates within amino-acid biosynthesis; L-histidine biosynthesis; L-histidine from 5-phospho-alpha-D-ribose 1-diphosphate: step 7/9. This Halorubrum lacusprofundi (strain ATCC 49239 / DSM 5036 / JCM 8891 / ACAM 34) protein is Histidinol-phosphate aminotransferase.